A 305-amino-acid polypeptide reads, in one-letter code: Glycine--tRNA ligase alpha subunit (305 aa).

The protein belongs to the class-II aminoacyl-tRNA synthetase family. Tetramer of two alpha and two beta subunits.

It localises to the cytoplasm. It catalyses the reaction tRNA(Gly) + glycine + ATP = glycyl-tRNA(Gly) + AMP + diphosphate. This chain is Glycine--tRNA ligase alpha subunit, found in Streptococcus sanguinis (strain SK36).